The primary structure comprises 340 residues: Glycerol-3-phosphate dehydrogenase [NAD(P)+] (340 aa).

Residues S13, Y14, and K108 each contribute to the NADPH site. K108, G137, and T139 together coordinate sn-glycerol 3-phosphate. A141 lines the NADPH pocket. The sn-glycerol 3-phosphate site is built by K193, D246, S256, R257, and N258. The active-site Proton acceptor is the K193. R257 serves as a coordination point for NADPH. NADPH-binding residues include I281 and E283.

Belongs to the NAD-dependent glycerol-3-phosphate dehydrogenase family.

The protein resides in the cytoplasm. The catalysed reaction is sn-glycerol 3-phosphate + NAD(+) = dihydroxyacetone phosphate + NADH + H(+). It carries out the reaction sn-glycerol 3-phosphate + NADP(+) = dihydroxyacetone phosphate + NADPH + H(+). The protein operates within membrane lipid metabolism; glycerophospholipid metabolism. In terms of biological role, catalyzes the reduction of the glycolytic intermediate dihydroxyacetone phosphate (DHAP) to sn-glycerol 3-phosphate (G3P), the key precursor for phospholipid synthesis. The chain is Glycerol-3-phosphate dehydrogenase [NAD(P)+] from Bartonella henselae (strain ATCC 49882 / DSM 28221 / CCUG 30454 / Houston 1) (Rochalimaea henselae).